The chain runs to 397 residues: Argininosuccinate synthase (397 aa).

An ATP-binding site is contributed by 9–17; the sequence is AYSGGLDTS. Residue Y87 participates in L-citrulline binding. Residue G117 participates in ATP binding. The L-aspartate site is built by T119, N123, and D124. N123 serves as a coordination point for L-citrulline. R127, S175, S184, E257, and Y269 together coordinate L-citrulline.

Belongs to the argininosuccinate synthase family. Type 1 subfamily. Homotetramer.

The protein resides in the cytoplasm. The enzyme catalyses L-citrulline + L-aspartate + ATP = 2-(N(omega)-L-arginino)succinate + AMP + diphosphate + H(+). It functions in the pathway amino-acid biosynthesis; L-arginine biosynthesis; L-arginine from L-ornithine and carbamoyl phosphate: step 2/3. This Dictyoglomus turgidum (strain DSM 6724 / Z-1310) protein is Argininosuccinate synthase.